Reading from the N-terminus, the 109-residue chain is Phosphocarrier protein HPr (109 aa).

Residues 22–109 (ELSAVFTIRN…EVFNSGFGEL (88 aa)) form the HPr domain. H36 (pros-phosphohistidine intermediate) is an active-site residue.

It belongs to the HPr family.

The protein resides in the cytoplasm. Functionally, general (non sugar-specific) component of the phosphoenolpyruvate-dependent sugar phosphotransferase system (sugar PTS). This major carbohydrate active-transport system catalyzes the phosphorylation of incoming sugar substrates concomitantly with their translocation across the cell membrane. The phosphoryl group from phosphoenolpyruvate (PEP) is transferred to the phosphoryl carrier protein HPr by enzyme I. Phospho-HPr then transfers it to the PTS EIIA domain. The chain is Phosphocarrier protein HPr (ptsH) from Chlamydia trachomatis serovar D (strain ATCC VR-885 / DSM 19411 / UW-3/Cx).